The chain runs to 130 residues: Small ribosomal subunit protein uS9 (130 aa).

The protein belongs to the universal ribosomal protein uS9 family.

The chain is Small ribosomal subunit protein uS9 from Polaromonas sp. (strain JS666 / ATCC BAA-500).